A 414-amino-acid chain; its full sequence is Serine hydroxymethyltransferase (414 aa).

(6S)-5,6,7,8-tetrahydrofolate contacts are provided by residues leucine 117 and 121–123 (GHL). Lysine 226 carries the post-translational modification N6-(pyridoxal phosphate)lysine.

It belongs to the SHMT family. In terms of assembly, homodimer. Requires pyridoxal 5'-phosphate as cofactor.

It localises to the cytoplasm. The enzyme catalyses (6R)-5,10-methylene-5,6,7,8-tetrahydrofolate + glycine + H2O = (6S)-5,6,7,8-tetrahydrofolate + L-serine. It participates in one-carbon metabolism; tetrahydrofolate interconversion. Its pathway is amino-acid biosynthesis; glycine biosynthesis; glycine from L-serine: step 1/1. In terms of biological role, catalyzes the reversible interconversion of serine and glycine with tetrahydrofolate (THF) serving as the one-carbon carrier. This reaction serves as the major source of one-carbon groups required for the biosynthesis of purines, thymidylate, methionine, and other important biomolecules. Also exhibits THF-independent aldolase activity toward beta-hydroxyamino acids, producing glycine and aldehydes, via a retro-aldol mechanism. In Dictyoglomus thermophilum (strain ATCC 35947 / DSM 3960 / H-6-12), this protein is Serine hydroxymethyltransferase.